The chain runs to 256 residues: Pimeloyl-[acyl-carrier protein] methyl ester esterase (256 aa).

The AB hydrolase-1 domain occupies 17–241 (VYLIHGWGAN…KAAHAPFLSH (225 aa)). Residues Trp23, 83 to 84 (SL), and 145 to 149 (FLQLQ) each bind substrate. Ser83 acts as the Nucleophile in catalysis. Catalysis depends on residues Asp207 and His235. His235 provides a ligand contact to substrate.

This sequence belongs to the AB hydrolase superfamily. Carboxylesterase BioH family. Monomer.

It localises to the cytoplasm. The enzyme catalyses 6-carboxyhexanoyl-[ACP] methyl ester + H2O = 6-carboxyhexanoyl-[ACP] + methanol + H(+). It participates in cofactor biosynthesis; biotin biosynthesis. Its function is as follows. The physiological role of BioH is to remove the methyl group introduced by BioC when the pimeloyl moiety is complete. It allows to synthesize pimeloyl-ACP via the fatty acid synthetic pathway through the hydrolysis of the ester bonds of pimeloyl-ACP esters. This is Pimeloyl-[acyl-carrier protein] methyl ester esterase from Neisseria meningitidis serogroup C / serotype 2a (strain ATCC 700532 / DSM 15464 / FAM18).